Reading from the N-terminus, the 409-residue chain is Probable tRNA pseudouridine synthase D (409 aa).

Catalysis depends on Asp73, which acts as the Nucleophile. In terms of domain architecture, TRUD spans Gly146–Ala365.

Belongs to the pseudouridine synthase TruD family.

The enzyme catalyses uridine(13) in tRNA = pseudouridine(13) in tRNA. In terms of biological role, could be responsible for synthesis of pseudouridine from uracil-13 in transfer RNAs. The protein is Probable tRNA pseudouridine synthase D of Thermoplasma volcanium (strain ATCC 51530 / DSM 4299 / JCM 9571 / NBRC 15438 / GSS1).